The primary structure comprises 193 residues: MILYLASGSPRRAELLQQIAVPFTVLPAPSIDETPRSAEAAVDYVRRMAREKALVGQARMPTPGAVLGADTAVVLGDQILGKPADDTEALAMLTQLSGTSHQVISAVCVCSEGRQAVRHTVTTVQFRPFEAARLEVYVATGEGRDKAGSYGIQGLGGALVESLSGSYSGVVGLPLEQTVELLEWADIPYWQID.

Aspartate 70 functions as the Proton acceptor in the catalytic mechanism.

It belongs to the Maf family. YhdE subfamily. It depends on a divalent metal cation as a cofactor.

The protein resides in the cytoplasm. The catalysed reaction is dTTP + H2O = dTMP + diphosphate + H(+). The enzyme catalyses UTP + H2O = UMP + diphosphate + H(+). Nucleoside triphosphate pyrophosphatase that hydrolyzes dTTP and UTP. May have a dual role in cell division arrest and in preventing the incorporation of modified nucleotides into cellular nucleic acids. The chain is dTTP/UTP pyrophosphatase from Alcanivorax borkumensis (strain ATCC 700651 / DSM 11573 / NCIMB 13689 / SK2).